The chain runs to 365 residues: Carbamoyl phosphate synthase small chain (365 aa).

CPSase stretches follow at residues 1–166 (MKRQ…PSPG) and 1–169 (MKRQ…GRGH). Positions 45, 218, and 220 each coordinate L-glutamine. The Glutamine amidotransferase type-1 domain occupies 170 to 357 (RVVLVDFGMK…LTMIENFKKE (188 aa)). C245 functions as the Nucleophile in the catalytic mechanism. Positions 246, 249, 287, 289, and 290 each coordinate L-glutamine. Residues H330 and E332 contribute to the active site.

The protein belongs to the CarA family. Composed of two chains; the small (or glutamine) chain promotes the hydrolysis of glutamine to ammonia, which is used by the large (or ammonia) chain to synthesize carbamoyl phosphate. Tetramer of heterodimers (alpha,beta)4.

It catalyses the reaction hydrogencarbonate + L-glutamine + 2 ATP + H2O = carbamoyl phosphate + L-glutamate + 2 ADP + phosphate + 2 H(+). The catalysed reaction is L-glutamine + H2O = L-glutamate + NH4(+). Its pathway is amino-acid biosynthesis; L-arginine biosynthesis; carbamoyl phosphate from bicarbonate: step 1/1. It functions in the pathway pyrimidine metabolism; UMP biosynthesis via de novo pathway; (S)-dihydroorotate from bicarbonate: step 1/3. Its function is as follows. Small subunit of the glutamine-dependent carbamoyl phosphate synthetase (CPSase). CPSase catalyzes the formation of carbamoyl phosphate from the ammonia moiety of glutamine, carbonate, and phosphate donated by ATP, constituting the first step of 2 biosynthetic pathways, one leading to arginine and/or urea and the other to pyrimidine nucleotides. The small subunit (glutamine amidotransferase) binds and cleaves glutamine to supply the large subunit with the substrate ammonia. This Bacillus cereus (strain ATCC 14579 / DSM 31 / CCUG 7414 / JCM 2152 / NBRC 15305 / NCIMB 9373 / NCTC 2599 / NRRL B-3711) protein is Carbamoyl phosphate synthase small chain.